Reading from the N-terminus, the 156-residue chain is Endoribonuclease YbeY (156 aa).

Residues His-115, His-119, and His-125 each contribute to the Zn(2+) site.

The protein belongs to the endoribonuclease YbeY family. Zn(2+) serves as cofactor.

The protein resides in the cytoplasm. Single strand-specific metallo-endoribonuclease involved in late-stage 70S ribosome quality control and in maturation of the 3' terminus of the 16S rRNA. The sequence is that of Endoribonuclease YbeY from Actinobacillus succinogenes (strain ATCC 55618 / DSM 22257 / CCUG 43843 / 130Z).